A 116-amino-acid polypeptide reads, in one-letter code: Large ribosomal subunit protein uL18 (116 aa).

This sequence belongs to the universal ribosomal protein uL18 family. As to quaternary structure, part of the 50S ribosomal subunit; part of the 5S rRNA/L5/L18/L25 subcomplex. Contacts the 5S and 23S rRNAs.

In terms of biological role, this is one of the proteins that bind and probably mediate the attachment of the 5S RNA into the large ribosomal subunit, where it forms part of the central protuberance. The protein is Large ribosomal subunit protein uL18 of Shewanella baltica (strain OS223).